Reading from the N-terminus, the 78-residue chain is Ferritin light chain (78 aa).

Residues glutamate 1 to serine 59 form the Ferritin-like diiron domain.

It belongs to the ferritin family. As to quaternary structure, oligomer of 24 subunits. There are two types of subunits: L (light) chain and H (heavy) chain. The major chain can be light or heavy, depending on the species and tissue type. The functional molecule forms a roughly spherical shell with a diameter of 12 nm and contains a central cavity into which the insoluble mineral iron core is deposited. Interacts with NCOA4.

It is found in the cytoplasmic vesicle. The protein localises to the autophagosome. The protein resides in the cytoplasm. It localises to the autolysosome. Stores iron in a soluble, non-toxic, readily available form. Important for iron homeostasis. Iron is taken up in the ferrous form and deposited as ferric hydroxides after oxidation. Also plays a role in delivery of iron to cells. Mediates iron uptake in capsule cells of the developing kidney. Delivery to lysosomes by the cargo receptor NCOA4 for autophagic degradation and release or iron. In Sus scrofa (Pig), this protein is Ferritin light chain (FTL).